Consider the following 353-residue polypeptide: Mitochondrial distribution and morphology protein 10 (353 aa).

The protein belongs to the MDM10 family. Component of the ER-mitochondria encounter structure (ERMES) or MDM complex, composed of MMM1, MDM10, MDM12 and MDM34. Associates with the mitochondrial outer membrane sorting assembly machinery SAM(core) complex.

It is found in the mitochondrion outer membrane. In terms of biological role, component of the ERMES/MDM complex, which serves as a molecular tether to connect the endoplasmic reticulum and mitochondria. Components of this complex are involved in the control of mitochondrial shape and protein biogenesis and may function in phospholipid exchange. MDM10 is involved in the late assembly steps of the general translocase of the mitochondrial outer membrane (TOM complex). Functions in the TOM40-specific route of the assembly of outer membrane beta-barrel proteins, including the association of TOM40 with the receptor TOM22 and small TOM proteins. Can associate with the SAM(core) complex as well as the MDM12-MMM1 complex, both involved in late steps of the major beta-barrel assembly pathway, that is responsible for biogenesis of all outer membrane beta-barrel proteins. May act as a switch that shuttles between both complexes and channels precursor proteins into the TOM40-specific pathway. Plays a role in mitochondrial morphology and in the inheritance of mitochondria. This Yarrowia lipolytica (strain CLIB 122 / E 150) (Yeast) protein is Mitochondrial distribution and morphology protein 10.